A 397-amino-acid chain; its full sequence is Elongation factor Tu (397 aa).

The tr-type G domain occupies Lys-10–Pro-206. The segment at Gly-19–Thr-26 is G1. Gly-19–Thr-26 provides a ligand contact to GTP. Residue Thr-26 coordinates Mg(2+). The G2 stretch occupies residues Gly-62–Ser-66. Residues Asp-83–Gly-86 form a G3 region. GTP is bound by residues Asp-83–His-87 and Asn-138–Asp-141. Residues Asn-138–Asp-141 form a G4 region. Positions Ser-176–Leu-178 are G5.

The protein belongs to the TRAFAC class translation factor GTPase superfamily. Classic translation factor GTPase family. EF-Tu/EF-1A subfamily. As to quaternary structure, monomer.

The protein resides in the cytoplasm. The enzyme catalyses GTP + H2O = GDP + phosphate + H(+). In terms of biological role, GTP hydrolase that promotes the GTP-dependent binding of aminoacyl-tRNA to the A-site of ribosomes during protein biosynthesis. The chain is Elongation factor Tu from Kitasatospora aureofaciens (Streptomyces aureofaciens).